We begin with the raw amino-acid sequence, 368 residues long: Cyclin-dependent kinase 2 (368 aa).

Residues 45-330 form the Protein kinase domain; sequence FCSLRRIGEG…AKGALSHRYF (286 aa). ATP is bound by residues 51–59 and Lys74; that span reads IGEGTYGVV. The active-site Proton acceptor is Asp170. The Mg(2+) site is built by Asn175 and Asp188.

It belongs to the protein kinase superfamily. CMGC Ser/Thr protein kinase family. CDC2/CDKX subfamily. In terms of assembly, interacts with cye-1; the interaction likely regulates cdk-2 activity and is probably required for gld-1 phosphorylation. Requires Mg(2+) as cofactor.

The enzyme catalyses L-seryl-[protein] + ATP = O-phospho-L-seryl-[protein] + ADP + H(+). The catalysed reaction is L-threonyl-[protein] + ATP = O-phospho-L-threonyl-[protein] + ADP + H(+). Serine/threonine-protein kinase which, in association with cye-1, regulates proliferation, quiescent state and cell fate during the development of several cell lineages. In the embryo, initiates the establishment of cell polarity through the recruitment of the centrosomal proteins spd-2 and spd-5 during prophase. Phosphorylation and inhibition of the translational repressor gld-1 by the cdk-2/cye-1 complex regulates the pool of germline stem cells and the size of the mitotic zone in the gonads by preventing entry into meiosis. The protein is Cyclin-dependent kinase 2 of Caenorhabditis elegans.